Reading from the N-terminus, the 364-residue chain is Phospho-N-acetylmuramoyl-pentapeptide-transferase (364 aa).

Helical transmembrane passes span 18–38, 48–68, 91–111, 114–134, 154–174, 183–203, 214–234, 237–257, 280–300, and 343–363; these read SLLILLILLLGLLCLGFAQIL, LFPLAVSAICSAILGYVVVPV, GTPTMGGIFFVPVAVIIALIW, LDPAVLAVSIVTLAYMGIGWI, LILQIAIAVGFCIWTFLTQSA, GQIILPLGLFFWIIAGFVLVA, VDGLAGGTGSLAFLGLAALMA, NPGLMIFCACMSGGCLGFIVH, AIGILSGHVWGLFLVSGIFFV, and TQIVGLFYLINAGLAVLAVIS.

This sequence belongs to the glycosyltransferase 4 family. MraY subfamily. It depends on Mg(2+) as a cofactor.

Its subcellular location is the cell inner membrane. The enzyme catalyses UDP-N-acetyl-alpha-D-muramoyl-L-alanyl-gamma-D-glutamyl-meso-2,6-diaminopimeloyl-D-alanyl-D-alanine + di-trans,octa-cis-undecaprenyl phosphate = di-trans,octa-cis-undecaprenyl diphospho-N-acetyl-alpha-D-muramoyl-L-alanyl-D-glutamyl-meso-2,6-diaminopimeloyl-D-alanyl-D-alanine + UMP. It functions in the pathway cell wall biogenesis; peptidoglycan biosynthesis. Its function is as follows. Catalyzes the initial step of the lipid cycle reactions in the biosynthesis of the cell wall peptidoglycan: transfers peptidoglycan precursor phospho-MurNAc-pentapeptide from UDP-MurNAc-pentapeptide onto the lipid carrier undecaprenyl phosphate, yielding undecaprenyl-pyrophosphoryl-MurNAc-pentapeptide, known as lipid I. This chain is Phospho-N-acetylmuramoyl-pentapeptide-transferase, found in Rippkaea orientalis (strain PCC 8801 / RF-1) (Cyanothece sp. (strain PCC 8801)).